The following is a 149-amino-acid chain: Protegrin-5 (149 aa).

The N-terminal stretch at 1–29 is a signal peptide; that stretch reads METQRASLCLGRWSLWLLLLGLVVPSASA. The propeptide occupies 30 to 130; the sequence is QALSYREAVL…DITCNEVQGV (101 aa). The interval 61-80 is disordered; it reads DQPPKADEDPGTPKPVSFTV. Disulfide bonds link Cys-85-Cys-96, Cys-107-Cys-124, Cys-136-Cys-145, and Cys-138-Cys-143. The residue at position 148 (Arg-148) is an Arginine amide.

Belongs to the cathelicidin family.

The protein resides in the secreted. Its function is as follows. Microbicidal activity. The polypeptide is Protegrin-5 (NPG5) (Sus scrofa (Pig)).